Reading from the N-terminus, the 271-residue chain is Regulatory protein RecX (271 aa).

Belongs to the RecX family.

Its subcellular location is the cytoplasm. Its function is as follows. Modulates RecA activity. The sequence is that of Regulatory protein RecX from Lactobacillus delbrueckii subsp. bulgaricus (strain ATCC 11842 / DSM 20081 / BCRC 10696 / JCM 1002 / NBRC 13953 / NCIMB 11778 / NCTC 12712 / WDCM 00102 / Lb 14).